Consider the following 730-residue polypeptide: Dynein axonemal intermediate chain 7 (730 aa).

Residues 1–14 (MAPKSKKAPSKKKM) show a composition bias toward basic residues. The disordered stretch occupies residues 1–20 (MAPKSKKAPSKKKMTKAERL).

It belongs to the DNAI7 family. In terms of assembly, part of the multisubunit axonemal dynein complex formed at least of two heavy chains and a number of intermediate and light chains. Interacts with tubulin. Associates with microtubule. Ubiquitinated. Ubiquitination leads to its degradation through the 26S proteasome. Ubiquitin-proteasome-mediated DNAI7 degradation occurs in mitosis. In terms of tissue distribution, high expressed in lung, kidney, and testis.

The protein resides in the cell projection. The protein localises to the cilium. It is found in the cytoplasm. In terms of biological role, via its association with the multisubunit axonemal dynein complex, is potentially involved in the regulation of cilia function. May also act as a cell cycle regulator. The polypeptide is Dynein axonemal intermediate chain 7 (Dnai7) (Mus musculus (Mouse)).